A 317-amino-acid chain; its full sequence is Melanocyte-stimulating hormone receptor (317 aa).

At 1 to 37 the chain is on the extracellular side; the sequence is MPVQGSLRSLVGAVNSTPTASPHLRPATNQTEPQCLE. The N-linked (GlcNAc...) asparagine glycan is linked to N29. A helical transmembrane segment spans residues 38–63; the sequence is VSVPVGLFLCLGLVSLVENTLVVAVI. At 64–72 the chain is on the cytoplasmic side; the sequence is AKNRNLHSP. Residues 73-93 form a helical membrane-spanning segment; sequence MYCFICCLALSDLLVSVSNVL. At 94-118 the chain is on the extracellular side; it reads KTAVLLLLEAGALAAQATVVQQLGN. The helical transmembrane segment at 119–140 threads the bilayer; sequence VINMLICSSMVSSLCFLGAIAM. Residues 141 to 163 lie on the Cytoplasmic side of the membrane; the sequence is DRYISIFYALRYHSIVTLARARR. Residues 164 to 183 traverse the membrane as a helical segment; the sequence is AIAAVWVASILSSILFFTYY. Residues 184–191 are Extracellular-facing; sequence DRTAALLC. Residues 192–211 traverse the membrane as a helical segment; sequence LVVFFLAMLVLMAVLYVHML. Topologically, residues 212–240 are cytoplasmic; it reads TQACQHAQGIARLHKRQHPVQQGWGLKGA. The chain crosses the membrane as a helical span at residues 241–266; that stretch reads ATLAVLLGVFFLCWGPLFLHLTLIAV. Residues 267 to 279 lie on the Extracellular side of the membrane; it reads CPQHPTCNCIVKN. Residues 280–300 form a helical membrane-spanning segment; that stretch reads FKLFLALIICNAIVDPLIYAF. Residues 301–317 lie on the Cytoplasmic side of the membrane; sequence RSQELRKTLKEVLLFSW.

This sequence belongs to the G-protein coupled receptor 1 family. As to quaternary structure, interacts with MGRN1, but does not undergo MGRN1-mediated ubiquitination; this interaction competes with GNAS-binding and thus inhibits agonist-induced cAMP production. Interacts with OPN3; the interaction results in a decrease in MC1R-mediated cAMP signaling and ultimately a decrease in melanin production in melanocytes.

Its subcellular location is the cell membrane. Functionally, receptor for MSH (alpha, beta and gamma) and ACTH. The activity of this receptor is mediated by G proteins which activate adenylate cyclase. Mediates melanogenesis, the production of eumelanin (black/brown) and phaeomelanin (red/yellow), via regulation of cAMP signaling in melanocytes. The sequence is that of Melanocyte-stimulating hormone receptor (MC1R) from Varecia rubra (Red ruffed lemur).